We begin with the raw amino-acid sequence, 269 residues long: Extracellular metalloprotease UREG_07765 (269 aa).

The N-terminal stretch at 1 to 18 (MRLSVSLLALAFGSLVAA) is a signal peptide. N-linked (GlcNAc...) asparagine glycosylation is present at Asn179. His191 contributes to the Zn(2+) binding site. Residue Glu192 is part of the active site. His195 serves as a coordination point for Zn(2+). The disordered stretch occupies residues 207-227 (VSDTPPQRSSTQGCPSSRDSC). A compositionally biased stretch (polar residues) spans 210-225 (TPPQRSSTQGCPSSRD). The cysteines at positions 220 and 246 are disulfide-linked.

The protein belongs to the peptidase M43B family.

Its subcellular location is the secreted. Its function is as follows. Secreted metalloproteinase that allows assimilation of proteinaceous substrates. In Uncinocarpus reesii (strain UAMH 1704), this protein is Extracellular metalloprotease UREG_07765.